Consider the following 86-residue polypeptide: Neurotoxin 3FTx-LT (86 aa).

The N-terminal stretch at 1-21 (MKTLLLTLVVVTIVCLDLGYT) is a signal peptide. Disulfide bonds link C24–C45, C27–C32, C38–C63, C67–C78, and C79–C84.

Expressed by the venom gland.

It is found in the secreted. Its function is as follows. Binds with low affinity to muscular (alpha-1-beta-1-delta-epsilon/CHRNA1-CHRNB1-CHRND-CHRNE) and very low affinity to neuronal (alpha-7/CHRNA7) nicotinic acetylcholine receptor (nAChR). This chain is Neurotoxin 3FTx-LT, found in Bungarus fasciatus (Banded krait).